We begin with the raw amino-acid sequence, 247 residues long: Carboxy-S-adenosyl-L-methionine synthase (247 aa).

S-adenosyl-L-methionine contacts are provided by residues tyrosine 38, glycine 63–serine 65, asparagine 131, and arginine 198.

It belongs to the class I-like SAM-binding methyltransferase superfamily. Cx-SAM synthase family. In terms of assembly, homodimer.

The catalysed reaction is prephenate + S-adenosyl-L-methionine = carboxy-S-adenosyl-L-methionine + 3-phenylpyruvate + H2O. Catalyzes the conversion of S-adenosyl-L-methionine (SAM) to carboxy-S-adenosyl-L-methionine (Cx-SAM). In Desulforapulum autotrophicum (strain ATCC 43914 / DSM 3382 / VKM B-1955 / HRM2) (Desulfobacterium autotrophicum), this protein is Carboxy-S-adenosyl-L-methionine synthase.